The sequence spans 95 residues: UPF0213 protein PEPE_0875 (95 aa).

The region spanning asparagine 7 to lysine 82 is the GIY-YIG domain.

The protein belongs to the UPF0213 family.

In Pediococcus pentosaceus (strain ATCC 25745 / CCUG 21536 / LMG 10740 / 183-1w), this protein is UPF0213 protein PEPE_0875.